Here is a 299-residue protein sequence, read N- to C-terminus: Taste receptor type 2 member 42 (299 aa).

At 1-7 the chain is on the extracellular side; sequence MATELDK. The helical transmembrane segment at 8-28 threads the bilayer; it reads IFLILAIAEFIISMLGNVFIG. Residues 29 to 50 are Cytoplasmic-facing; the sequence is LVNCSEGIKNQKVFSSDFILTS. Residues 51–71 traverse the membrane as a helical segment; that stretch reads LAISTIGQLLVILFDSFLVGL. Topologically, residues 72-101 are extracellular; it reads ASHLYTTYRLGKPVIMLWHMTNHLTTWLAT. Residues 102-122 form a helical membrane-spanning segment; the sequence is CLSVFYFFKIAHFPHSLFLWL. The Cytoplasmic portion of the chain corresponds to 123-127; the sequence is RWRMN. A helical transmembrane segment spans residues 128-148; sequence GMIAMLLILSLFLLIFDSSVL. Residues 149–187 lie on the Extracellular side of the membrane; it reads EIFIDISLNIIDKSSLTLYLDESKTLYDKLSILKTLLSL. The chain crosses the membrane as a helical span at residues 188-208; it reads TSFIPFSLSLTSVLFLYLSLV. At 209–238 the chain is on the cytoplasmic side; that stretch reads RHTRNLKLSSLGSRDSSTEAHRRAMKMVMS. Residues 239–259 traverse the membrane as a helical segment; that stretch reads FLFLFIVHFFSLQVANWIFFM. Residues 260-265 lie on the Extracellular side of the membrane; sequence LWNNKY. Residues 266-286 form a helical membrane-spanning segment; sequence IKFVMLALNAFPSCHSFILIL. Residues 287–299 lie on the Cytoplasmic side of the membrane; the sequence is GNSKLRQTAVRLL.

Belongs to the G-protein coupled receptor T2R family.

It localises to the membrane. Functionally, receptor that may play a role in the perception of bitterness and is gustducin-linked. May play a role in sensing the chemical composition of the gastrointestinal content. The activity of this receptor may stimulate alpha gustducin, mediate PLC-beta-2 activation and lead to the gating of TRPM5. In Gorilla gorilla gorilla (Western lowland gorilla), this protein is Taste receptor type 2 member 42 (TAS2R42).